Consider the following 106-residue polypeptide: ATP-dependent Clp protease adapter protein ClpS (106 aa).

A disordered region spans residues 1 to 20; the sequence is MKVDMSTSVKDDAQLEASRV.

Belongs to the ClpS family. In terms of assembly, binds to the N-terminal domain of the chaperone ClpA.

Involved in the modulation of the specificity of the ClpAP-mediated ATP-dependent protein degradation. In Chromobacterium violaceum (strain ATCC 12472 / DSM 30191 / JCM 1249 / CCUG 213 / NBRC 12614 / NCIMB 9131 / NCTC 9757 / MK), this protein is ATP-dependent Clp protease adapter protein ClpS.